Here is a 315-residue protein sequence, read N- to C-terminus: MTTKPPLTLRLAAPRGFCAGVDRAIQIVEEALKKWGAPVYVRHEIVHNRHVVERLEALGAIFVEELEECPDDRPVIFSAHGVPKSVPAEAGRRNMIYVDATCPLVSKVHVEAERHFNAAREIVLIGHAGHPEVIGTMGQLPEGSVALIETVEDARAFQPRDHANLAFITQTTLSVDDTADIVAALQSRFPGIATPHKEDICYATTNRQEAVKVFAPGAELVLVIGARTSSNSVRLVEVALRAGAQDAKLIASADDIDWSWFNGITTLGLTAGASAPEDLVQGVIEACRDRFEVTVETVKTADETVTFKLPRVLAG.

C18 lines the [4Fe-4S] cluster pocket. (2E)-4-hydroxy-3-methylbut-2-enyl diphosphate contacts are provided by H47 and H80. 2 residues coordinate dimethylallyl diphosphate: H47 and H80. Residues H47 and H80 each coordinate isopentenyl diphosphate. Position 102 (C102) interacts with [4Fe-4S] cluster. Residue H130 participates in (2E)-4-hydroxy-3-methylbut-2-enyl diphosphate binding. A dimethylallyl diphosphate-binding site is contributed by H130. H130 provides a ligand contact to isopentenyl diphosphate. The Proton donor role is filled by E132. T171 is a (2E)-4-hydroxy-3-methylbut-2-enyl diphosphate binding site. C201 lines the [4Fe-4S] cluster pocket. S229, S230, N231, and S274 together coordinate (2E)-4-hydroxy-3-methylbut-2-enyl diphosphate. The dimethylallyl diphosphate site is built by S229, S230, N231, and S274. S229, S230, N231, and S274 together coordinate isopentenyl diphosphate.

This sequence belongs to the IspH family. [4Fe-4S] cluster is required as a cofactor.

It carries out the reaction isopentenyl diphosphate + 2 oxidized [2Fe-2S]-[ferredoxin] + H2O = (2E)-4-hydroxy-3-methylbut-2-enyl diphosphate + 2 reduced [2Fe-2S]-[ferredoxin] + 2 H(+). The catalysed reaction is dimethylallyl diphosphate + 2 oxidized [2Fe-2S]-[ferredoxin] + H2O = (2E)-4-hydroxy-3-methylbut-2-enyl diphosphate + 2 reduced [2Fe-2S]-[ferredoxin] + 2 H(+). Its pathway is isoprenoid biosynthesis; dimethylallyl diphosphate biosynthesis; dimethylallyl diphosphate from (2E)-4-hydroxy-3-methylbutenyl diphosphate: step 1/1. It functions in the pathway isoprenoid biosynthesis; isopentenyl diphosphate biosynthesis via DXP pathway; isopentenyl diphosphate from 1-deoxy-D-xylulose 5-phosphate: step 6/6. Catalyzes the conversion of 1-hydroxy-2-methyl-2-(E)-butenyl 4-diphosphate (HMBPP) into a mixture of isopentenyl diphosphate (IPP) and dimethylallyl diphosphate (DMAPP). Acts in the terminal step of the DOXP/MEP pathway for isoprenoid precursor biosynthesis. This chain is 4-hydroxy-3-methylbut-2-enyl diphosphate reductase, found in Hyphomonas neptunium (strain ATCC 15444).